A 34-amino-acid chain; its full sequence is Turripeptide Pal9a (34 aa).

3 cysteine pairs are disulfide-bonded: Cys3/Cys17, Cys8/Cys19, and Cys13/Cys30. Gln34 is subject to Glutamine amide.

In terms of tissue distribution, expressed by the venom duct.

Its subcellular location is the secreted. In Polystira albida (White giant-turris), this protein is Turripeptide Pal9a.